The following is a 366-amino-acid chain: Type 2A phosphatase-associated protein 42 (366 aa).

The segment at 318–366 is disordered; that stretch reads RVLQGGEEPEQAPDEENMDWQDRETYKAREWDEFKESHAKGSGNTMNRG. The segment covering 324–336 has biased composition (acidic residues); the sequence is EEPEQAPDEENMD. The segment covering 337-356 has biased composition (basic and acidic residues); it reads WQDRETYKAREWDEFKESHA.

This sequence belongs to the IGBP1/TAP42 family. In terms of assembly, associates with the PP2a (PPH21 and PPH22) and SIT4 protein phosphatase catalytic subunits. Interacts with PPG1, PPH3 and TIP41. In terms of processing, phosphorylated by TOR kinases. Dephosphorylated by CDC55, TPD3 and SIT4.

Its function is as follows. Involved in negative regulation of the TOR signaling pathway in response to type of available nitrogen source. Inhibitor of PP2A phosphatase SIT4, which results in inhibition of nuclear export of MSN2, due to lack of dephosphorylation by SIT4. Also required for rapamycin induced activation of expression of many nitrogen discrimination pathway (NDP) genes. In complex with PPH21, required for organization of the actin cytoskeletom during the cell cycle via a Rho GTPase-dependent mechanism. The chain is Type 2A phosphatase-associated protein 42 (TAP42) from Saccharomyces cerevisiae (strain ATCC 204508 / S288c) (Baker's yeast).